The primary structure comprises 88 residues: DNA-directed RNA polymerase subunit omega (88 aa).

It belongs to the RNA polymerase subunit omega family. In terms of assembly, the RNAP catalytic core consists of 2 alpha, 1 beta, 1 beta' and 1 omega subunit. When a sigma factor is associated with the core the holoenzyme is formed, which can initiate transcription.

The enzyme catalyses RNA(n) + a ribonucleoside 5'-triphosphate = RNA(n+1) + diphosphate. In terms of biological role, promotes RNA polymerase assembly. Latches the N- and C-terminal regions of the beta' subunit thereby facilitating its interaction with the beta and alpha subunits. This chain is DNA-directed RNA polymerase subunit omega, found in Anaeromyxobacter dehalogenans (strain 2CP-1 / ATCC BAA-258).